A 622-amino-acid chain; its full sequence is Low affinity potassium transport system protein Kup (622 aa).

Helical transmembrane passes span Leu9–Leu29, Val49–Leu69, Val103–Ile123, Pro137–Ile157, Val165–Leu185, Val213–Ala233, Trp247–Leu267, Pro276–Ala296, Ile337–Phe357, Leu363–Thr383, Phe396–Leu416, and Leu419–Thr439.

The protein belongs to the HAK/KUP transporter (TC 2.A.72) family.

It is found in the cell inner membrane. The enzyme catalyses K(+)(in) + H(+)(in) = K(+)(out) + H(+)(out). In terms of biological role, responsible for the low-affinity transport of potassium into the cell. Likely operates as a K(+):H(+) symporter. This is Low affinity potassium transport system protein Kup from Escherichia coli O157:H7.